Consider the following 342-residue polypeptide: Putative glycosyltransferases (342 aa).

Transmembrane regions (helical) follow at residues I227–I247 and V262–I282.

Belongs to the glycosyltransferase 2 family.

It localises to the cell membrane. May play only a redundant role in maintaining cell wall viability and bacterial virulence. This is Putative glycosyltransferases (pimF) from Mycobacterium tuberculosis (strain CDC 1551 / Oshkosh).